The primary structure comprises 516 residues: Maturase K (516 aa).

Belongs to the intron maturase 2 family. MatK subfamily.

The protein localises to the plastid. Its subcellular location is the chloroplast. In terms of biological role, usually encoded in the trnK tRNA gene intron. Probably assists in splicing its own and other chloroplast group II introns. In Colchicum speciosum (Giant meadow saffron), this protein is Maturase K.